We begin with the raw amino-acid sequence, 747 residues long: MSLIMRVLNGNLSLRLSAMKTVCQLQCGYSSHAKYAEHKSIERIRNIGISAHIDSGKTTLTERILFYTGRIAEMHEVRGKDNVGATMDSMELERQRGITIQSAATYTMWKDTNINIIDTPGHVDFTVEVERALRVLDGAVLVLCAVGGVQSQTLTVNRQMKRYNVPCLAFINKLDRLGSNPNRVLSQLRSKMNHNAAFIQLPIGVESHCKGLVDLVQERAVYFEGENGADLRLDEIPQEMRVESQERRQELIEHLSNADETFGELFLEEKPFTEADIKAALRRTCIKRTFTPVLVGTALKNKGVQPLLDAIIDYLPNPGEVENLAYIEHEGKEKQQIVLNPARDGKDPFMGLAFKLEAGRFGQLTYLRCYQGVLRKGDNIFNARTNKKVRIARLVRLHSNQMEDVNEVFAGDIFALFGVDCASGDTFTTNPKNNMAMESIFVPEPVVSMAIKPNNTKDRDNFSKAIARFTKEDPTFHFYFDNDVKETLVSGMGELHLEIYAQRMEREYGCPVTLGKPKVAFRETLVGPCEFDFLHKKQSGGSGQYARIIGLMEPLPPNQNTLLEFVDETVGTNVPKQFVPGVEKGYREMCERGMLSGHKLSGIRFRLQDGGHHIVDSSELAFMLAAHGAIKEVFQNGSWQILEPIMLVEVTAPEEFQGAVMGHLSKRHGIITGTEGTEGWFTVYAEVPLNDMFGYASELRSSTQGKGEFTMEYSRYSPCLPDVQDQIVRQYQESQGMGQAEKKKKKN.

The N-terminal 16 residues, 1–16, are a transit peptide targeting the mitochondrion; that stretch reads MSLIMRVLNGNLSLRL. The 278-residue stretch at 42–319 folds into the tr-type G domain; that stretch reads ERIRNIGISA…AIIDYLPNPG (278 aa). GTP-binding positions include 51-58, 118-122, and 172-175; these read AHIDSGKT, DTPGH, and NKLD.

This sequence belongs to the TRAFAC class translation factor GTPase superfamily. Classic translation factor GTPase family. EF-G/EF-2 subfamily.

The protein resides in the mitochondrion. Its pathway is protein biosynthesis; polypeptide chain elongation. Functionally, mitochondrial GTPase that catalyzes the GTP-dependent ribosomal translocation step during translation elongation. During this step, the ribosome changes from the pre-translocational (PRE) to the post-translocational (POST) state as the newly formed A-site-bound peptidyl-tRNA and P-site-bound deacylated tRNA move to the P and E sites, respectively. Catalyzes the coordinated movement of the two tRNA molecules, the mRNA and conformational changes in the ribosome. Essential during development as it acts as a retrograde signal from mitochondria to the nucleus to slow down cell proliferation if mitochondrial energy output is low. The polypeptide is Elongation factor G, mitochondrial (Drosophila grimshawi (Hawaiian fruit fly)).